A 516-amino-acid chain; its full sequence is Protein psiC (516 aa).

Residues 1-19 (MKILILSFFLILGINLVFC) form the signal peptide. The 141-residue stretch at 109-249 (ESKDEPGIYV…YDACGVCLGK (141 aa)) folds into the PA14 domain. Residues N134, N234, N250, N284, N333, N357, and N367 are each glycosylated (N-linked (GlcNAc...) asparagine). Over residues 418–427 (DIIIDSSSDI) the composition is skewed to low complexity. Residues 418-465 (DIIIDSSSDIPIPTLSPSPQPSRFPTDTPTNTPMPPTRPPTPTEDPKI) form a disordered region. The segment covering 449-460 (TPMPPTRPPTPT) has biased composition (pro residues).

This sequence belongs to the prespore-cell-inducing factor family.

The protein localises to the secreted. The sequence is that of Protein psiC (psiC) from Dictyostelium discoideum (Social amoeba).